Consider the following 563-residue polypeptide: Cysteine--tRNA ligase, chloroplastic/mitochondrial (563 aa).

Residue Cys-91 coordinates Zn(2+). Gly-92 is an L-cysteine binding site. The 'HIGH' region motif lies at 93-103 (VTAYDLSHIGH). An L-cysteine-binding site is contributed by Thr-131. A 'KIIK' region motif is present at residues 136 to 139 (KIIA). Cys-271, His-296, and Glu-300 together coordinate Zn(2+). His-296 contacts L-cysteine. The short motif at 328 to 332 (KMSKS) is the 'KMSKS' region element. Lys-331 provides a ligand contact to ATP.

This sequence belongs to the class-I aminoacyl-tRNA synthetase family. The cofactor is Zn(2+).

The protein resides in the plastid. Its subcellular location is the chloroplast. It localises to the mitochondrion. The enzyme catalyses tRNA(Cys) + L-cysteine + ATP = L-cysteinyl-tRNA(Cys) + AMP + diphosphate. Its function is as follows. Required for female gametophyte development. Is necessary for the fusion of central cell nuclei and programmed cell death (PCD) of the antipodals. The sequence is that of Cysteine--tRNA ligase, chloroplastic/mitochondrial from Arabidopsis thaliana (Mouse-ear cress).